Consider the following 203-residue polypeptide: Ras-related protein Rab-7L1 (203 aa).

GTP is bound by residues Ser33, Lys34, His35, Tyr36, Lys37, and Thr39. Positions 36–44 match the Effector region motif; the sequence is YKSTVGVDF. Phosphothreonine; by LRRK2 is present on Thr71. Position 72 is a phosphoserine; by LRRK2 (Ser72). 3 residues coordinate GTP: Lys126, Val156, and Lys157. Residues Cys202 and Cys203 are each lipidated (S-geranylgeranyl cysteine).

It belongs to the small GTPase superfamily. Rab family. Interacts with LRRK2 (via the N-terminus); this interaction is direct and stimulates kinase activity. In terms of processing, in case of Salmonella enterica serovar Typhimurium (S.typhimurium) infection, is proteolytically cleaved between Gly-41 and Val-42 by the GtgE viral protease encoded on the Gifsy-2 lysogen bacteriophage, which therefore prevents the recruitment of RAB29 to S.typhimurium-containing vacuoles. In contrast, no proteolytically cleavage is detected in S.typhi-infected cells. As to expression, ubiquitous.

It is found in the cell membrane. The protein resides in the cytoplasm. Its subcellular location is the perinuclear region. The protein localises to the golgi apparatus. It localises to the golgi apparatus membrane. It is found in the trans-Golgi network. The protein resides in the vacuole. Its subcellular location is the cytoskeleton. Its function is as follows. The small GTPases Rab are key regulators in vesicle trafficking. Essential for maintaining the integrity of the endosome-trans-Golgi network structure. Together with LRRK2, plays a role in the retrograde trafficking pathway for recycling proteins, such as mannose 6 phosphate receptor (M6PR), between lysosomes and the Golgi apparatus in a retromer-dependent manner. Recruits LRRK2 to the Golgi complex and stimulates LRRK2 kinase activity. Stimulates phosphorylation of RAB10 'Thr-73' by LRRK2. Regulates neuronal process morphology in the intact central nervous system (CNS). May play a role in the formation of typhoid toxin transport intermediates during Salmonella enterica serovar Typhi (S.typhi) epithelial cell infection. This Homo sapiens (Human) protein is Ras-related protein Rab-7L1 (RAB29).